A 270-amino-acid chain; its full sequence is Bis(5'-nucleosyl)-tetraphosphatase, symmetrical (270 aa).

It belongs to the Ap4A hydrolase family.

It carries out the reaction P(1),P(4)-bis(5'-adenosyl) tetraphosphate + H2O = 2 ADP + 2 H(+). Its function is as follows. Hydrolyzes diadenosine 5',5'''-P1,P4-tetraphosphate to yield ADP. This Cellvibrio japonicus (strain Ueda107) (Pseudomonas fluorescens subsp. cellulosa) protein is Bis(5'-nucleosyl)-tetraphosphatase, symmetrical.